Here is a 628-residue protein sequence, read N- to C-terminus: tRNA(Thr) (cytosine(32)-N(3))-methyltransferase (628 aa).

Positions 1–18 (MGVADLIKKFESISKEEG) are enriched in basic and acidic residues. Disordered stretches follow at residues 1–106 (MGVA…GENA), 124–269 (AEVL…VNDL), and 302–331 (NIAH…TEGS). Over residues 22–31 (VDTNSSSKPL) the composition is skewed to polar residues. A compositionally biased stretch (basic and acidic residues) spans 32 to 42 (KSNDETKELHQ). Acidic residues predominate over residues 53–62 (DVNEEFENEP). S93 is modified (phosphoserine). The segment covering 132–146 (EESDAIQEGVAEETE) has biased composition (acidic residues). Phosphothreonine is present on T150. The span at 173 to 186 (PAEEYSQSEEDADI) shows a compositional bias: acidic residues. The segment covering 196-207 (NAENASQQANDG) has biased composition (polar residues). Over residues 215–230 (KNKKKKNKKKNKKKRN) the composition is skewed to basic residues. A compositionally biased stretch (polar residues) spans 231 to 240 (GNVNTNANVD). Phosphoserine occurs at positions 321 and 326. T347 carries the post-translational modification Phosphothreonine. The S-adenosyl-L-methionine site is built by W399, Y403, G441, D466, D492, L493, and I515.

The protein belongs to the methyltransferase superfamily. METL family. Interacts with SES1.

Its subcellular location is the cytoplasm. The protein resides in the cytoskeleton. The catalysed reaction is cytidine(32) in tRNA(Thr) + S-adenosyl-L-methionine = N(3)-methylcytidine(32) in tRNA(Thr) + S-adenosyl-L-homocysteine + H(+). The enzyme catalyses cytidine(32) in tRNA(Ser) + S-adenosyl-L-methionine = N(3)-methylcytidine(32) in tRNA(Ser) + S-adenosyl-L-homocysteine + H(+). Its function is as follows. S-adenosyl-L-methionine-dependent methyltransferase that mediates N(3)-methylcytidine modification of residue 32 of the tRNA anticodon loop of tRNA(Thr) and tRNA(Ser). N(3)-methylcytidine methylation of tRNA(Thr) requires the N6-threonylcarbamoylation of tRNA (t6A37) by the EKC/KEOPS complex as prerequisite. N(3)-methylcytidine methylation of tRNA(Ser) requires the formation of N(6)-dimethylallyladenosine(37) (i6A37) by MOD5 as prerequisite. Methylation of tRNA(Ser) is also stimulated by SES1. Binds F-actin and shows weak F-actin cross-linking activity. The polypeptide is tRNA(Thr) (cytosine(32)-N(3))-methyltransferase (ABP140) (Saccharomyces cerevisiae (strain ATCC 204508 / S288c) (Baker's yeast)).